A 326-amino-acid polypeptide reads, in one-letter code: MCPLTLQVTGLMNVSEPNSSFAFVNEFILQGFSCEWTIQIFLFSLFTTTYALTITGNGAIAFVLWCDRRLHTPMYMFLGNFSFLEIWYVSSTVPKMLVNFLSEKKNISFAGCFLQFYFFFSLGTSECLLLTVMAFDQYLAICRPLLYPNIMTGHLYAKLVILCWVCGFLWFLIPIVLISQMPFCGPNIIDHVVCDPGPRFALDCVSAPRIQLFCYTLSSLVIFGNFLFIIGSYTLVLKAMLGMPSSTGRHKAFSTCGSHLAVVSLCYSSLMVMYVSPGLGHSTGMQKIETLFYAMVTPLFNPLIYSLQNKEIKAALRKVLGSSNII.

Residues 1-44 (MCPLTLQVTGLMNVSEPNSSFAFVNEFILQGFSCEWTIQIFLFS) are Extracellular-facing. Residues Asn-13 and Asn-18 are each glycosylated (N-linked (GlcNAc...) asparagine). Residues 45–65 (LFTTTYALTITGNGAIAFVLW) form a helical membrane-spanning segment. The Cytoplasmic segment spans residues 66–72 (CDRRLHT). A helical membrane pass occupies residues 73-93 (PMYMFLGNFSFLEIWYVSSTV). Residues 94–112 (PKMLVNFLSEKKNISFAGC) are Extracellular-facing. The N-linked (GlcNAc...) asparagine glycan is linked to Asn-106. Cys-112 and Cys-194 form a disulfide bridge. Residues 113–133 (FLQFYFFFSLGTSECLLLTVM) form a helical membrane-spanning segment. At 134–158 (AFDQYLAICRPLLYPNIMTGHLYAK) the chain is on the cytoplasmic side. A helical transmembrane segment spans residues 159–179 (LVILCWVCGFLWFLIPIVLIS). Over 180–216 (QMPFCGPNIIDHVVCDPGPRFALDCVSAPRIQLFCYT) the chain is Extracellular. The chain crosses the membrane as a helical span at residues 217-237 (LSSLVIFGNFLFIIGSYTLVL). The Cytoplasmic portion of the chain corresponds to 238-259 (KAMLGMPSSTGRHKAFSTCGSH). Residues 260-280 (LAVVSLCYSSLMVMYVSPGLG) traverse the membrane as a helical segment. The Extracellular segment spans residues 281–287 (HSTGMQK). The helical transmembrane segment at 288–308 (IETLFYAMVTPLFNPLIYSLQ) threads the bilayer. Topologically, residues 309–326 (NKEIKAALRKVLGSSNII) are cytoplasmic.

The protein belongs to the G-protein coupled receptor 1 family.

The protein localises to the cell membrane. Functionally, odorant receptor. The polypeptide is Olfactory receptor 11H1 (OR11H1) (Homo sapiens (Human)).